The following is a 109-amino-acid chain: Iron-sulfur cluster assembly protein CyaY (109 aa).

Belongs to the frataxin family.

Functionally, involved in iron-sulfur (Fe-S) cluster assembly. May act as a regulator of Fe-S biogenesis. This is Iron-sulfur cluster assembly protein CyaY from Acidovorax ebreus (strain TPSY) (Diaphorobacter sp. (strain TPSY)).